The primary structure comprises 267 residues: Cilia- and flagella-associated protein 300 (267 aa).

It belongs to the CFAP300 family. As to quaternary structure, interacts with DNAAF2. As to expression, expressed in nasal epithelial cells.

Its subcellular location is the cytoplasm. The protein localises to the cytoskeleton. It localises to the cilium axoneme. Its function is as follows. Cilium- and flagellum-specific protein that plays a role in axonemal structure organization and motility. May play a role in outer and inner dynein arm assembly. The chain is Cilia- and flagella-associated protein 300 from Homo sapiens (Human).